A 245-amino-acid polypeptide reads, in one-letter code: Complement C1q subcomponent subunit C (245 aa).

The signal sequence occupies residues 1–28 (MVVGTSCQPQHGLYLLLLLLALPLRSQA). The 82-residue stretch at 31–112 (GCYGIPGMPG…GPPGEPGEEG (82 aa)) folds into the Collagen-like domain. Residues P36, P39, P42, P45, and P63 each carry the 4-hydroxyproline modification. A disordered region spans residues 42–119 (PGTPGKDGHD…EEGRYKQKHQ (78 aa)). K75 bears the 5-hydroxylysine mark. K75 carries an O-linked (Gal...) hydroxylysine glycan. A 4-hydroxyproline mark is found at P81, P96, P99, and P105. A compositionally biased stretch (pro residues) spans 98–107 (DPGPRGPPGE). Residues 115-245 (KQKHQSVFTV…VFSGFLLFPD (131 aa)) enclose the C1q domain. C179 and C193 are joined by a disulfide.

As to quaternary structure, core component of the complement C1 complex, a calcium-dependent complex composed of 1 molecule of the C1Q subcomplex, 2 molecules of C1R and 2 molecules of C1S. The C1Q subcomplex is composed 18 subunits: 3 chains of C1QA, C1QB, and C1QC trimerize to form 6 collagen-like triple helices connected to six globular ligand-recognition modules (C1q domain). Post-translationally, O-linked glycans consist of Glc-Gal disaccharides bound to the oxygen atom of post-translationally added hydroxyl groups.

It localises to the secreted. It is found in the cell surface. With respect to regulation, the C1Q subcomplex is inhibited by sulfated molecules, such as triterpenoid sulfates, heparan sulfate, or chondroitin sulfates. Functionally, core component of the complement C1 complex, a multiprotein complex that initiates the classical pathway of the complement system, a cascade of proteins that leads to phagocytosis and breakdown of pathogens and signaling that strengthens the adaptive immune system. The classical complement pathway is initiated by the C1Q subcomplex of the C1 complex, which specifically binds IgG or IgM immunoglobulins complexed with antigens, forming antigen-antibody complexes on the surface of pathogens: C1QA, together with C1QB and C1QC, specifically recognizes and binds the Fc regions of IgG or IgM via its C1q domain. Immunoglobulin-binding activates the proenzyme C1R, which cleaves C1S, initiating the proteolytic cascade of the complement system. The C1Q subcomplex is activated by a hexamer of IgG complexed with antigens, while it is activated by a pentameric IgM. The C1Q subcomplex also recognizes and binds phosphatidylserine exposed on the surface of cells undergoing programmed cell death, possibly promoting activation of the complement system. The protein is Complement C1q subcomponent subunit C of Rattus norvegicus (Rat).